Here is a 422-residue protein sequence, read N- to C-terminus: L-threonine dehydratase biosynthetic IlvA (422 aa).

Lys-56 is modified (N6-(pyridoxal phosphate)lysine). Pyridoxal 5'-phosphate-binding positions include Asn-83, 189–193 (GGGGL), and Ser-315. The region spanning 339 to 413 (HYFILNFPQR…FDPSNIYINE (75 aa)) is the ACT-like domain.

The protein belongs to the serine/threonine dehydratase family. As to quaternary structure, homotetramer. Pyridoxal 5'-phosphate is required as a cofactor.

It carries out the reaction L-threonine = 2-oxobutanoate + NH4(+). It functions in the pathway amino-acid biosynthesis; L-isoleucine biosynthesis; 2-oxobutanoate from L-threonine: step 1/1. Its function is as follows. Catalyzes the anaerobic formation of alpha-ketobutyrate and ammonia from threonine in a two-step reaction. The first step involved a dehydration of threonine and a production of enamine intermediates (aminocrotonate), which tautomerizes to its imine form (iminobutyrate). Both intermediates are unstable and short-lived. The second step is the nonenzymatic hydrolysis of the enamine/imine intermediates to form 2-ketobutyrate and free ammonia. In the low water environment of the cell, the second step is accelerated by RidA. The protein is L-threonine dehydratase biosynthetic IlvA (ilvA) of Staphylococcus aureus (strain bovine RF122 / ET3-1).